The primary structure comprises 504 residues: UDP-N-acetylmuramoylalanine--D-glutamate ligase (504 aa).

129–135 (GTNGKTT) lines the ATP pocket.

Belongs to the MurCDEF family.

It is found in the cytoplasm. It carries out the reaction UDP-N-acetyl-alpha-D-muramoyl-L-alanine + D-glutamate + ATP = UDP-N-acetyl-alpha-D-muramoyl-L-alanyl-D-glutamate + ADP + phosphate + H(+). It participates in cell wall biogenesis; peptidoglycan biosynthesis. Cell wall formation. Catalyzes the addition of glutamate to the nucleotide precursor UDP-N-acetylmuramoyl-L-alanine (UMA). This chain is UDP-N-acetylmuramoylalanine--D-glutamate ligase, found in Cupriavidus metallidurans (strain ATCC 43123 / DSM 2839 / NBRC 102507 / CH34) (Ralstonia metallidurans).